The sequence spans 128 residues: Fluoride-specific ion channel FluC (128 aa).

4 helical membrane passes run 2-22 (LTFA…GAWL), 37-57 (WGTL…VALI), 65-85 (AWIR…FSTF), and 101-121 (AAAY…LGLA). 2 residues coordinate Na(+): G77 and T80.

Belongs to the fluoride channel Fluc/FEX (TC 1.A.43) family.

Its subcellular location is the cell inner membrane. The enzyme catalyses fluoride(in) = fluoride(out). With respect to regulation, na(+) is not transported, but it plays an essential structural role and its presence is essential for fluoride channel function. Fluoride-specific ion channel. Important for reducing fluoride concentration in the cell, thus reducing its toxicity. This chain is Fluoride-specific ion channel FluC, found in Bordetella bronchiseptica (strain ATCC BAA-588 / NCTC 13252 / RB50) (Alcaligenes bronchisepticus).